A 246-amino-acid polypeptide reads, in one-letter code: 4-hydroxy-tetrahydrodipicolinate reductase (246 aa).

An NAD(+)-binding site is contributed by 9 to 14; that stretch reads GNTGRM. Position 36 (Arg36) interacts with NADP(+). NAD(+)-binding positions include 78-80 and 104-107; these read GTT and SPNM. The Proton donor/acceptor role is filled by His137. Residue His138 coordinates (S)-2,3,4,5-tetrahydrodipicolinate. The Proton donor role is filled by Lys141. 147–148 is a (S)-2,3,4,5-tetrahydrodipicolinate binding site; it reads GT.

The protein belongs to the DapB family.

It localises to the cytoplasm. The enzyme catalyses (S)-2,3,4,5-tetrahydrodipicolinate + NAD(+) + H2O = (2S,4S)-4-hydroxy-2,3,4,5-tetrahydrodipicolinate + NADH + H(+). The catalysed reaction is (S)-2,3,4,5-tetrahydrodipicolinate + NADP(+) + H2O = (2S,4S)-4-hydroxy-2,3,4,5-tetrahydrodipicolinate + NADPH + H(+). It functions in the pathway amino-acid biosynthesis; L-lysine biosynthesis via DAP pathway; (S)-tetrahydrodipicolinate from L-aspartate: step 4/4. Functionally, catalyzes the conversion of 4-hydroxy-tetrahydrodipicolinate (HTPA) to tetrahydrodipicolinate. The protein is 4-hydroxy-tetrahydrodipicolinate reductase of Chlamydia muridarum (strain MoPn / Nigg).